The sequence spans 201 residues: NADH-quinone oxidoreductase subunit C (201 aa).

The protein belongs to the complex I 30 kDa subunit family. As to quaternary structure, NDH-1 is composed of 14 different subunits. Subunits NuoB, C, D, E, F, and G constitute the peripheral sector of the complex.

It localises to the cell inner membrane. It carries out the reaction a quinone + NADH + 5 H(+)(in) = a quinol + NAD(+) + 4 H(+)(out). Functionally, NDH-1 shuttles electrons from NADH, via FMN and iron-sulfur (Fe-S) centers, to quinones in the respiratory chain. The immediate electron acceptor for the enzyme in this species is believed to be ubiquinone. Couples the redox reaction to proton translocation (for every two electrons transferred, four hydrogen ions are translocated across the cytoplasmic membrane), and thus conserves the redox energy in a proton gradient. The protein is NADH-quinone oxidoreductase subunit C of Mesorhizobium japonicum (strain LMG 29417 / CECT 9101 / MAFF 303099) (Mesorhizobium loti (strain MAFF 303099)).